The primary structure comprises 102 residues: NADH-quinone oxidoreductase subunit K (102 aa).

Helical transmembrane passes span 2–22, 26–46, and 58–78; these read LDFY…GVIL, IFTI…IFAT, and VIVM…LALI.

It belongs to the complex I subunit 4L family. In terms of assembly, NDH-1 is composed of 14 different subunits. Subunits NuoA, H, J, K, L, M, N constitute the membrane sector of the complex.

It is found in the cell inner membrane. The enzyme catalyses a quinone + NADH + 5 H(+)(in) = a quinol + NAD(+) + 4 H(+)(out). NDH-1 shuttles electrons from NADH, via FMN and iron-sulfur (Fe-S) centers, to quinones in the respiratory chain. The immediate electron acceptor for the enzyme in this species is believed to be ubiquinone. Couples the redox reaction to proton translocation (for every two electrons transferred, four hydrogen ions are translocated across the cytoplasmic membrane), and thus conserves the redox energy in a proton gradient. This is NADH-quinone oxidoreductase subunit K from Campylobacter fetus subsp. fetus (strain 82-40).